The following is a 154-amino-acid chain: Toxin YhaV (154 aa).

Homohexamer; forms a complex with PrlF (SohA) with stoichiometry PrlF(2)-YhaV(4), possibly as a YhaV(2)-PrlF(2)-YhaV(2) complex like the MazFE complex. May dimerize in solution.

Toxic component of a type II toxin-antitoxin (TA) system. Has RNase activity in vitro. Acts as a transcription factor. The YhaV/PrlF complex binds the prlF-yhaV operon, probably negatively regulating its expression. In Escherichia coli O6:H1 (strain CFT073 / ATCC 700928 / UPEC), this protein is Toxin YhaV (yhaV).